A 212-amino-acid polypeptide reads, in one-letter code: Thymidylate kinase (212 aa).

11 to 18 (GPEGAGKT) contributes to the ATP binding site.

Belongs to the thymidylate kinase family.

The enzyme catalyses dTMP + ATP = dTDP + ADP. In terms of biological role, phosphorylation of dTMP to form dTDP in both de novo and salvage pathways of dTTP synthesis. The chain is Thymidylate kinase from Streptococcus pneumoniae (strain Taiwan19F-14).